The primary structure comprises 742 residues: uncharacterized protein (742 aa).

The disordered stretch occupies residues 1 to 102; sequence MMLLKRSNDN…FTQTKPNNTD (102 aa). Residues 18–28 show a composition bias toward low complexity; the sequence is NRQNRQNNRQN. The segment covering 48–57 has biased composition (basic and acidic residues); that stretch reads RDSSRMDPVD. Polar residues-rich tracts occupy residues 60-69 and 77-99; these read TLISFTSGKP and HDTG…TKPN.

This is an uncharacterized protein from Acanthamoeba polyphaga mimivirus (APMV).